Here is a 761-residue protein sequence, read N- to C-terminus: Complement factor B (761 aa).

The signal sequence occupies residues 1-25 (MGIGHNPRLCLVPLILGLLCGGVGM). 3 Sushi domains span residues 35 to 100 (SPCS…ECKA), 101 to 160 (IRCP…ICDD), and 163 to 220 (TYCP…SCQD). 6 disulfide bridges follow: Cys-37-Cys-76, Cys-62-Cys-98, Cys-103-Cys-145, Cys-131-Cys-158, Cys-165-Cys-205, and Cys-191-Cys-218. Residues Asn-122 and Asn-142 are each glycosylated (N-linked (GlcNAc...) asparagine). Residues 270 to 469 (NIYLVLDGSD…NLEDVFVQML (200 aa)) enclose the VWFA domain. Residues Ser-278 and Ser-280 each contribute to the Mg(2+) site. Asn-285 carries an N-linked (GlcNAc...) asparagine glycan. Residue Thr-353 participates in Mg(2+) binding. N-linked (GlcNAc...) asparagine glycosylation occurs at Asn-378. Residues 477 to 754 (LCGMVWEHKD…VLPWLKEKLQ (278 aa)) enclose the Peptidase S1 domain. 5 cysteine pairs are disulfide-bonded: Cys-478–Cys-596, Cys-511–Cys-527, Cys-599–Cys-615, Cys-656–Cys-682, and Cys-695–Cys-725. Catalysis depends on charge relay system residues His-526 and Asp-576. Ser-699 functions as the Charge relay system in the catalytic mechanism.

This sequence belongs to the peptidase S1 family. As to quaternary structure, monomer. Interacts with complement C3b; this interaction is dependent on the presence of Mg(2+). Catalytic component of the C3 convertase of the alternative complement pathway, also named C3bBb, composed of complement factor B Bb and complement C3b. Catalytic component of the C5 convertase of the alternative complement pathway, also named C3bBb3b, composed of complement factor B Bb and additional molecules of complement C3b. Interacts to CFP; this interaction contributes to the stabilization of the active C3-convertase enzyme complex. Mg(2+) is required as a cofactor. Mn(2+) serves as cofactor. Cleaved by CFD following activation of the alternative complement system, generating Ba and Bb chains. Cleavage and activation takes place when CFB is already associated with complement C3b.

The protein localises to the secreted. It is found in the cell surface. The catalysed reaction is Cleavage of Arg-|-Ser bond in complement component C3 alpha-chain to yield C3a and C3b, and Arg-|-Xaa bond in complement component C5 alpha-chain to yield C5a and C5b.. Functionally, precursor of the catalytic component of the C3 and C5 convertase complexes of the alternative pathway of the complement system, a cascade of proteins that leads to phagocytosis and breakdown of pathogens and signaling that strengthens the adaptive immune system. The alternative complement pathway acts as an amplification loop that enhances other complement pathways (classical, lectin and GZMK) by promoting formation of additional C3 and C5 convertases. CFB is cleaved and activated by CFD to generate Ba and Bb chains; Bb chain constituting the catalytic component of the C3 and C5 convertases. Serine protease component of the complement C3 and C5 convertase complexes of the alternative complement pathway. Following cleavage and activation by factor D (CFD), forms the C3 convertase together with complement C3b. As part of the C3 convertase, cleaves and activates C3 into C3a anaphylatoxin and C3b opsonin, the next components of the complement pathways. When an additional complement C3b molecule binds to the C3 convertase, forms the C5 convertase, which cleaves and activates C5 into C5a anaphylatoxin and C5b component of the membrane attack complex. Its function is as follows. Involved in proliferation and differentiation of preactivated B-lymphocytes, rapid spreading of peripheral blood monocytes, stimulation of lymphocyte blastogenesis and lysis of erythrocytes. The sequence is that of Complement factor B (CFB) from Bos taurus (Bovine).